An 807-amino-acid chain; its full sequence is AP-5 complex subunit zeta-1 (807 aa).

In terms of assembly, probably part of the adaptor protein complex 5 (AP-5) a tetramer composed of AP5B1, AP5M1, AP5S1 and AP5Z1. Interacts with ZFYVE26 and SPG11.

It is found in the cytoplasm. Its subcellular location is the nucleus. In terms of biological role, as part of AP-5, a probable fifth adaptor protein complex it may be involved in endosomal transport. According to PubMed:20613862 it is a putative helicase required for efficient homologous recombination DNA double-strand break repair. The sequence is that of AP-5 complex subunit zeta-1 (AP5Z1) from Homo sapiens (Human).